The following is a 192-amino-acid chain: HTH-type transcriptional regulator Hpr (192 aa).

Positions 12 to 156 (SIIFSHKFAQ…LLSIVRHVYG (145 aa)) constitute an HTH marR-type domain. Positions 62–85 (ISDIAKFGVMHVSTAFNFSKKLEE) form a DNA-binding region, H-T-H motif.

In terms of assembly, homodimer.

Its function is as follows. Negative regulator of protease production and sporulation. In Halalkalibacterium halodurans (strain ATCC BAA-125 / DSM 18197 / FERM 7344 / JCM 9153 / C-125) (Bacillus halodurans), this protein is HTH-type transcriptional regulator Hpr.